We begin with the raw amino-acid sequence, 236 residues long: DNA repair protein RecO (236 aa).

It belongs to the RecO family.

In terms of biological role, involved in DNA repair and RecF pathway recombination. The polypeptide is DNA repair protein RecO (Haemophilus influenzae (strain PittGG)).